Reading from the N-terminus, the 210-residue chain is MKTGKFIVIEGLEGAGKSSTHQVVVNTLKEFGIHEVVFTREPGGTPLAEKLRYLIKHEVEELVTAKAELLMLYAARVQLVENVIKPALAQGKWVVGDRHDLSSQAYQGGGRGLDQHLMTTLKNAVLGDFKPDFTLYLDIEPEIGLARVRGRGELDRIEQQNLDFFHRTRARYLQLVQQDPNAVLINADQPIELVQQDIRKAVQKFIEENV.

Glycine 11 to serine 18 contacts ATP.

Belongs to the thymidylate kinase family.

The catalysed reaction is dTMP + ATP = dTDP + ADP. Functionally, phosphorylation of dTMP to form dTDP in both de novo and salvage pathways of dTTP synthesis. This Histophilus somni (strain 129Pt) (Haemophilus somnus) protein is Thymidylate kinase.